A 384-amino-acid polypeptide reads, in one-letter code: MAKHLFTSESVSEGHPDKIADQISDAVLDAILEQDPKARVACETYVKTGMVLVGGEITTNAWVDIEELTRKTVADIGYVSSDMGFDANSCAVLSAIGKQSPDINQGVDRCDPLEQGAGDQGIMFGYATNETDVLMPAPITYAHRLMERQARVRKNGTLPWLRPDAKSQVTFQYDDGKIAGIDAVVLSTQHADTISQKDLQEAVMEEIIKPVLPAEWLSASTKYFINPTGRFVIGGPMGDCGLTGRKIIVDTYGGAARHGGGAFSGKDPSKVDRSAAYAARYVAKNIVAAGLADRCEIQVSYAIGVAEPTSIMIETFGTEKIDQEHLIQLVREFFDLRPYGLIQMLDLIQPIYRQTAAYGHFGREQFPWEKTDKAALLREAAGLK.

His15 contributes to the ATP binding site. Asp17 contacts Mg(2+). Glu43 is a binding site for K(+). L-methionine is bound by residues Glu56 and Gln99. The flexible loop stretch occupies residues 99-109 (QSPDINQGVDR). ATP contacts are provided by residues 164-166 (DAK), 230-231 (RF), Asp239, 245-246 (RK), Ala262, and Lys266. Residue Asp239 participates in L-methionine binding. L-methionine is bound at residue Lys270.

Belongs to the AdoMet synthase family. As to quaternary structure, homotetramer; dimer of dimers. Requires Mg(2+) as cofactor. K(+) serves as cofactor.

The protein resides in the cytoplasm. It catalyses the reaction L-methionine + ATP + H2O = S-adenosyl-L-methionine + phosphate + diphosphate. The protein operates within amino-acid biosynthesis; S-adenosyl-L-methionine biosynthesis; S-adenosyl-L-methionine from L-methionine: step 1/1. Functionally, catalyzes the formation of S-adenosylmethionine (AdoMet) from methionine and ATP. The overall synthetic reaction is composed of two sequential steps, AdoMet formation and the subsequent tripolyphosphate hydrolysis which occurs prior to release of AdoMet from the enzyme. This Edwardsiella ictaluri (strain 93-146) protein is S-adenosylmethionine synthase.